The chain runs to 88 residues: Molybdopterin synthase sulfur carrier subunit (88 aa).

A 1-thioglycine; alternate modification is found at Gly-88. A Glycyl adenylate; alternate modification is found at Gly-88.

Belongs to the MoaD family. MOCS2A subfamily. As to quaternary structure, heterotetramer; composed of 2 small (MOCS2A) and 2 large (MOCS2B) subunits. Post-translationally, C-terminal thiocarboxylation occurs in 2 steps, it is first acyl-adenylated (-COAMP) via the hesA/moeB/thiF part of MOCS3, then thiocarboxylated (-COSH) via the rhodanese domain of MOCS3.

It localises to the cytoplasm. The protein resides in the cytosol. It participates in cofactor biosynthesis; molybdopterin biosynthesis. In terms of biological role, acts as a sulfur carrier required for molybdopterin biosynthesis. Component of the molybdopterin synthase complex that catalyzes the conversion of precursor Z into molybdopterin by mediating the incorporation of 2 sulfur atoms into precursor Z to generate a dithiolene group. In the complex, serves as sulfur donor by being thiocarboxylated (-COSH) at its C-terminus by MOCS3. After interaction with MOCS2B, the sulfur is then transferred to precursor Z to form molybdopterin. In Mus musculus (Mouse), this protein is Molybdopterin synthase sulfur carrier subunit.